Consider the following 139-residue polypeptide: Ribonuclease VapC3 (139 aa).

The region spanning 14–121 (EAIVLDTGAF…VATDDYTLQR (108 aa)) is the PINc domain. Mg(2+) is bound at residue Asp19.

It belongs to the PINc/VapC protein family. Mg(2+) is required as a cofactor.

Its function is as follows. Toxic component of a type II toxin-antitoxin (TA) system. An RNase. This is Ribonuclease VapC3 from Aeropyrum pernix (strain ATCC 700893 / DSM 11879 / JCM 9820 / NBRC 100138 / K1).